The chain runs to 151 residues: Large ribosomal subunit protein bL9 (151 aa).

The protein belongs to the bacterial ribosomal protein bL9 family.

Functionally, binds to the 23S rRNA. The sequence is that of Large ribosomal subunit protein bL9 from Chlorobium phaeovibrioides (strain DSM 265 / 1930) (Prosthecochloris vibrioformis (strain DSM 265)).